A 208-amino-acid polypeptide reads, in one-letter code: Large ribosomal subunit protein uL3 (208 aa).

Gln-149 is subject to N5-methylglutamine.

The protein belongs to the universal ribosomal protein uL3 family. In terms of assembly, part of the 50S ribosomal subunit. Forms a cluster with proteins L14 and L19. Post-translationally, methylated by PrmB.

Functionally, one of the primary rRNA binding proteins, it binds directly near the 3'-end of the 23S rRNA, where it nucleates assembly of the 50S subunit. The polypeptide is Large ribosomal subunit protein uL3 (Haemophilus influenzae (strain PittGG)).